The primary structure comprises 456 residues: Alcohol acyltransferase 17 (456 aa).

Catalysis depends on proton acceptor residues histidine 166 and aspartate 382.

The protein belongs to the plant acyltransferase family. As to expression, expressed in fruit.

In terms of biological role, involved in the biosynthesis of volatile esters which confer kiwifruit flavor. Alcohol acyl transferase that can use a wide range of alcohols as substrate to produce esters. The chain is Alcohol acyltransferase 17 from Actinidia deliciosa (Kiwi).